A 270-amino-acid polypeptide reads, in one-letter code: 3-phenylpropionate-dihydrodiol/cinnamic acid-dihydrodiol dehydrogenase (270 aa).

Position 10–34 (10–34) interacts with NAD(+); the sequence is FITGGGSGLGLALVERFIEEGAQVA. Serine 143 contacts substrate. Tyrosine 156 (proton acceptor) is an active-site residue.

This sequence belongs to the short-chain dehydrogenases/reductases (SDR) family.

The catalysed reaction is 3-(cis-5,6-dihydroxycyclohexa-1,3-dien-1-yl)propanoate + NAD(+) = 3-(2,3-dihydroxyphenyl)propanoate + NADH + H(+). It carries out the reaction (2E)-3-(cis-5,6-dihydroxycyclohexa-1,3-dien-1-yl)prop-2-enoate + NAD(+) = (2E)-3-(2,3-dihydroxyphenyl)prop-2-enoate + NADH + H(+). Its pathway is aromatic compound metabolism; 3-phenylpropanoate degradation. Its function is as follows. Converts 3-phenylpropionate-dihydrodiol (PP-dihydrodiol) and cinnamic acid-dihydrodiol (CI-dihydrodiol) into 3-(2,3-dihydroxylphenyl)propanoic acid (DHPP) and 2,3-dihydroxicinnamic acid (DHCI), respectively. This Escherichia coli O8 (strain IAI1) protein is 3-phenylpropionate-dihydrodiol/cinnamic acid-dihydrodiol dehydrogenase.